A 197-amino-acid polypeptide reads, in one-letter code: Small ribosomal subunit protein eS1 (197 aa).

This sequence belongs to the eukaryotic ribosomal protein eS1 family.

The polypeptide is Small ribosomal subunit protein eS1 (Methanoculleus marisnigri (strain ATCC 35101 / DSM 1498 / JR1)).